We begin with the raw amino-acid sequence, 345 residues long: Phosphoribosylformylglycinamidine cyclo-ligase (345 aa).

The protein belongs to the AIR synthase family.

The protein localises to the cytoplasm. It catalyses the reaction 2-formamido-N(1)-(5-O-phospho-beta-D-ribosyl)acetamidine + ATP = 5-amino-1-(5-phospho-beta-D-ribosyl)imidazole + ADP + phosphate + H(+). It functions in the pathway purine metabolism; IMP biosynthesis via de novo pathway; 5-amino-1-(5-phospho-D-ribosyl)imidazole from N(2)-formyl-N(1)-(5-phospho-D-ribosyl)glycinamide: step 2/2. In Escherichia coli O7:K1 (strain IAI39 / ExPEC), this protein is Phosphoribosylformylglycinamidine cyclo-ligase.